A 187-amino-acid chain; its full sequence is BCL2/adenovirus E1B 19 kDa protein-interacting protein 3 (187 aa).

The tract at residues 42–86 is disordered; sequence LDAQHESGRSSSKSSHCDSPPRSQTPQDTNRAEIDSHSFGEKNST. Phosphoserine occurs at positions 48, 60, 77, 79, 85, and 88. A compositionally biased stretch (low complexity) spans 50–63; the sequence is RSSSKSSHCDSPPR. Residues 71 to 81 are compositionally biased toward basic and acidic residues; that stretch reads NRAEIDSHSFG. The short motif at 93-118 is the BH3 element; the sequence is IERRREVESILKKNSDWIWDWSSRPE. Residues 157–177 form a helical membrane-spanning segment; the sequence is VFLPSLLLSHLLAIGLGIYIG.

The protein belongs to the NIP3 family. In terms of assembly, homodimer. Binds to BCL2. Interacts with BNIP3L and ACAA2. Interacts (via BH3 domain) with SPATA18 (via coiled-coil domains). Interacts with BOK; promotes BOK oligomerization. Interacts with PPTC7; this interaction promotes BNIP3 degradation.

The protein resides in the mitochondrion. The protein localises to the mitochondrion outer membrane. Functionally, apoptosis-inducing protein that can overcome BCL2 suppression. May play a role in repartitioning calcium between the two major intracellular calcium stores in association with BCL2. Involved in mitochondrial quality control via its interaction with SPATA18/MIEAP: in response to mitochondrial damage, participates in mitochondrial protein catabolic process (also named MALM) leading to the degradation of damaged proteins inside mitochondria. The physical interaction of SPATA18/MIEAP, BNIP3 and BNIP3L/NIX at the mitochondrial outer membrane may play a critical role in the translocation of lysosomal proteins from the cytoplasm to the mitochondrial matrix. The physical interaction of SPATA18/MIEAP, BNIP3 and BNIP3L/NIX at the mitochondrial outer membrane regulates the opening of a pore in the mitochondrial double membrane in order to mediate the translocation of lysosomal proteins from the cytoplasm to the mitochondrial matrix. Plays an important role in the calprotectin (S100A8/A9)-induced cell death pathway. The sequence is that of BCL2/adenovirus E1B 19 kDa protein-interacting protein 3 from Mus musculus (Mouse).